A 185-amino-acid polypeptide reads, in one-letter code: Acireductone dioxygenase (185 aa).

Residues 1 to 23 (MSRLSIHPEGNTNATSPAEPLLE) form a disordered region. Residues His102, His104, Glu108, and His146 each coordinate Fe(2+). Residues His102, His104, Glu108, and His146 each coordinate Ni(2+).

The protein belongs to the acireductone dioxygenase (ARD) family. In terms of assembly, monomer. Requires Fe(2+) as cofactor. It depends on Ni(2+) as a cofactor.

It catalyses the reaction 1,2-dihydroxy-5-(methylsulfanyl)pent-1-en-3-one + O2 = 3-(methylsulfanyl)propanoate + CO + formate + 2 H(+). It carries out the reaction 1,2-dihydroxy-5-(methylsulfanyl)pent-1-en-3-one + O2 = 4-methylsulfanyl-2-oxobutanoate + formate + 2 H(+). Its pathway is amino-acid biosynthesis; L-methionine biosynthesis via salvage pathway; L-methionine from S-methyl-5-thio-alpha-D-ribose 1-phosphate: step 5/6. Its function is as follows. Catalyzes 2 different reactions between oxygen and the acireductone 1,2-dihydroxy-3-keto-5-methylthiopentene (DHK-MTPene) depending upon the metal bound in the active site. Fe-containing acireductone dioxygenase (Fe-ARD) produces formate and 2-keto-4-methylthiobutyrate (KMTB), the alpha-ketoacid precursor of methionine in the methionine recycle pathway. Ni-containing acireductone dioxygenase (Ni-ARD) produces methylthiopropionate, carbon monoxide and formate, and does not lie on the methionine recycle pathway. In Prochlorococcus marinus (strain MIT 9303), this protein is Acireductone dioxygenase.